Here is a 268-residue protein sequence, read N- to C-terminus: Ribosomal RNA small subunit methyltransferase A (268 aa).

Positions 18, 20, 45, 66, 91, and 112 each coordinate S-adenosyl-L-methionine.

This sequence belongs to the class I-like SAM-binding methyltransferase superfamily. rRNA adenine N(6)-methyltransferase family. RsmA subfamily.

The protein localises to the cytoplasm. The catalysed reaction is adenosine(1518)/adenosine(1519) in 16S rRNA + 4 S-adenosyl-L-methionine = N(6)-dimethyladenosine(1518)/N(6)-dimethyladenosine(1519) in 16S rRNA + 4 S-adenosyl-L-homocysteine + 4 H(+). In terms of biological role, specifically dimethylates two adjacent adenosines (A1518 and A1519) in the loop of a conserved hairpin near the 3'-end of 16S rRNA in the 30S particle. May play a critical role in biogenesis of 30S subunits. This is Ribosomal RNA small subunit methyltransferase A from Shewanella putrefaciens (strain CN-32 / ATCC BAA-453).